A 395-amino-acid chain; its full sequence is Choline/ethanolamine kinase (395 aa).

An N-acetylalanine modification is found at Ala2. ATP contacts are provided by residues Ser75–Leu81, Arg104, Gln146–Pro152, Gln244, and Asp264. Residue Gly77–Ser79 coordinates phosphocholine.

This sequence belongs to the choline/ethanolamine kinase family. In terms of assembly, homodimer, and heterodimer with CHKA.

The enzyme catalyses choline + ATP = phosphocholine + ADP + H(+). It carries out the reaction ethanolamine + ATP = phosphoethanolamine + ADP + H(+). It functions in the pathway phospholipid metabolism; phosphatidylethanolamine biosynthesis; phosphatidylethanolamine from ethanolamine: step 1/3. Has a key role in phospholipid metabolism, and catalyzes the first step of phosphatidylethanolamine and phosphatidylcholine biosynthesis. The sequence is that of Choline/ethanolamine kinase (CHKB) from Homo sapiens (Human).